The primary structure comprises 384 residues: Queuine tRNA-ribosyltransferase (384 aa).

Asp92 acts as the Proton acceptor in catalysis. Residues 92–96, Asp146, Gln192, and Gly219 each bind substrate; that span reads DSGGF. An RNA binding region spans residues 250 to 256; that stretch reads GVGTPAE. Asp269 functions as the Nucleophile in the catalytic mechanism. Residues 274-278 are RNA binding; important for wobble base 34 recognition; that stretch reads TRNAR. 4 residues coordinate Zn(2+): Cys307, Cys309, Cys312, and His338.

It belongs to the queuine tRNA-ribosyltransferase family. Homodimer. Within each dimer, one monomer is responsible for RNA recognition and catalysis, while the other monomer binds to the replacement base PreQ1. Zn(2+) is required as a cofactor.

It carries out the reaction 7-aminomethyl-7-carbaguanine + guanosine(34) in tRNA = 7-aminomethyl-7-carbaguanosine(34) in tRNA + guanine. Its pathway is tRNA modification; tRNA-queuosine biosynthesis. Functionally, catalyzes the base-exchange of a guanine (G) residue with the queuine precursor 7-aminomethyl-7-deazaguanine (PreQ1) at position 34 (anticodon wobble position) in tRNAs with GU(N) anticodons (tRNA-Asp, -Asn, -His and -Tyr). Catalysis occurs through a double-displacement mechanism. The nucleophile active site attacks the C1' of nucleotide 34 to detach the guanine base from the RNA, forming a covalent enzyme-RNA intermediate. The proton acceptor active site deprotonates the incoming PreQ1, allowing a nucleophilic attack on the C1' of the ribose to form the product. After dissociation, two additional enzymatic reactions on the tRNA convert PreQ1 to queuine (Q), resulting in the hypermodified nucleoside queuosine (7-(((4,5-cis-dihydroxy-2-cyclopenten-1-yl)amino)methyl)-7-deazaguanosine). The polypeptide is Queuine tRNA-ribosyltransferase (Desulfosudis oleivorans (strain DSM 6200 / JCM 39069 / Hxd3) (Desulfococcus oleovorans)).